A 729-amino-acid polypeptide reads, in one-letter code: Fatty acid oxidation complex subunit alpha (729 aa).

The enoyl-CoA hydratase/isomerase stretch occupies residues 1–189 (MLYKGDTLYL…KIGLVDGVVK (189 aa)). Aspartate 296 is a binding site for substrate. Residues 311-729 (ETPKQAAVLG…ARPVGDLKTA (419 aa)) form a 3-hydroxyacyl-CoA dehydrogenase region. NAD(+)-binding positions include methionine 324, aspartate 343, 400–402 (VVE), lysine 407, and serine 429. The active-site For 3-hydroxyacyl-CoA dehydrogenase activity is histidine 450. Asparagine 453 provides a ligand contact to NAD(+). Substrate is bound by residues asparagine 500 and tyrosine 660. A disordered region spans residues 708 to 729 (RHNEPYYPPVEPARPVGDLKTA).

The protein in the N-terminal section; belongs to the enoyl-CoA hydratase/isomerase family. It in the C-terminal section; belongs to the 3-hydroxyacyl-CoA dehydrogenase family. In terms of assembly, heterotetramer of two alpha chains (FadB) and two beta chains (FadA).

The catalysed reaction is a (3S)-3-hydroxyacyl-CoA + NAD(+) = a 3-oxoacyl-CoA + NADH + H(+). The enzyme catalyses a (3S)-3-hydroxyacyl-CoA = a (2E)-enoyl-CoA + H2O. It catalyses the reaction a 4-saturated-(3S)-3-hydroxyacyl-CoA = a (3E)-enoyl-CoA + H2O. It carries out the reaction (3S)-3-hydroxybutanoyl-CoA = (3R)-3-hydroxybutanoyl-CoA. The catalysed reaction is a (3Z)-enoyl-CoA = a 4-saturated (2E)-enoyl-CoA. The enzyme catalyses a (3E)-enoyl-CoA = a 4-saturated (2E)-enoyl-CoA. It participates in lipid metabolism; fatty acid beta-oxidation. Its function is as follows. Involved in the aerobic and anaerobic degradation of long-chain fatty acids via beta-oxidation cycle. Catalyzes the formation of 3-oxoacyl-CoA from enoyl-CoA via L-3-hydroxyacyl-CoA. It can also use D-3-hydroxyacyl-CoA and cis-3-enoyl-CoA as substrate. The protein is Fatty acid oxidation complex subunit alpha of Shigella flexneri serotype 5b (strain 8401).